Reading from the N-terminus, the 204-residue chain is MLELLCRVSPARLPWRSCMSLAIQPAQRRRFATEAAGKRTETEKSAFTEWRTVYSMPGIRLVAALSRLKVYQAVITAAGTPIVFALGSAGQLSTDALAIYAAIGVTGLITLTLASYASSNLVGFIYVNEEQDLLKLAYVDFWGRRQETLIETEDLLPSWEQGSPSRLRFVSPICLRSDSKRRYKLLNRFGHVSDRQLFEGLFGN.

Topologically, residues 1-69 (MLELLCRVSP…RLVAALSRLK (69 aa)) are mitochondrial matrix. A helical membrane pass occupies residues 70 to 90 (VYQAVITAAGTPIVFALGSAG). The Mitochondrial intermembrane portion of the chain corresponds to 91–95 (QLSTD). Residues 96–116 (ALAIYAAIGVTGLITLTLASY) form a helical membrane-spanning segment. Residues 117–204 (ASSNLVGFIY…RQLFEGLFGN (88 aa)) lie on the Mitochondrial matrix side of the membrane.

The protein belongs to the TMEM186 family. Associates with mitochondrial complex I assembly intermediates during its biogenesis.

It is found in the mitochondrion inner membrane. In terms of biological role, as part of the MCIA complex, required for efficient assembly of the mitochondrial complex I. The protein is Transmembrane protein 186 of Drosophila melanogaster (Fruit fly).